We begin with the raw amino-acid sequence, 620 residues long: UDP-glucose:protein N-beta-glucosyltransferase (620 aa).

Belongs to the glycosyltransferase 41 family.

The protein localises to the cytoplasm. It carries out the reaction L-asparaginyl-[protein] + UDP-alpha-D-glucose = N(4)-(beta-D-glucosyl)-L-asparaginyl-[protein] + UDP + H(+). Its pathway is protein modification; protein glycosylation. Functionally, inverting glycosyltransferase that catalyzes the transfer of one glucose moiety from UDP-glucose to an asparagine residue in peptides and proteins containing the NX(S/T) motif, resulting in their modification with a beta-linked 1,N-glucose. Likely acts as a key component of a general protein glycosylation system. In Actinobacillus pleuropneumoniae serotype 5b (strain L20), this protein is UDP-glucose:protein N-beta-glucosyltransferase.